Here is a 559-residue protein sequence, read N- to C-terminus: Peptidyl-prolyl isomerase cwc27 (559 aa).

Residues 11–184 (PTASATLHTT…YPVKVVSCEV (174 aa)) form the PPIase cyclophilin-type domain. 3 disordered regions span residues 201-395 (ATAP…GFSS), 413-449 (ESAD…EDEE), and 518-559 (PRER…REKP). Residues 261–273 (APKKTSPEAEQQT) show a composition bias toward basic and acidic residues. Over residues 305 to 319 (LPDPESPARSPPQSP) the composition is skewed to pro residues. Polar residues-rich tracts occupy residues 384–394 (GSSTNGVTGFS) and 425–442 (TSIS…AKSN).

This sequence belongs to the cyclophilin-type PPIase family. CWC27 subfamily. In terms of assembly, associated with the spliceosome.

It localises to the cytoplasm. The protein localises to the nucleus. It carries out the reaction [protein]-peptidylproline (omega=180) = [protein]-peptidylproline (omega=0). PPIases accelerate the folding of proteins. It catalyzes the cis-trans isomerization of proline imidic peptide bonds in oligopeptides. Involved in pre-mRNA splicing. This is Peptidyl-prolyl isomerase cwc27 (cwc27) from Aspergillus fumigatus (strain ATCC MYA-4609 / CBS 101355 / FGSC A1100 / Af293) (Neosartorya fumigata).